Reading from the N-terminus, the 272-residue chain is Putative bark agglutinin LECRPA3 (272 aa).

The first 29 residues, 1–29 (PFNPETVYALLAMLISFFVLLASARKENS), serve as a signal peptide directing secretion. 3 N-linked (GlcNAc...) asparagine glycosylation sites follow: asparagine 36, asparagine 39, and asparagine 65. Residues glutamate 150 and aspartate 152 each contribute to the Mn(2+) site. Ca(2+)-binding residues include aspartate 152, tyrosine 154, asparagine 156, and aspartate 159. Positions 159 and 164 each coordinate Mn(2+).

Belongs to the leguminous lectin family. As to quaternary structure, homotetramer. In terms of tissue distribution, weak expression in bark. The lectin accumulates in the inner bark in autumn.

In terms of biological role, bark lectins are storage proteins that probably maintain stocks of nitrogen during dormant period. Self-aggregatable molecules that can bind their own carbohydrate side chains. They could also play a role in the plant's defense against phytophagous invertebrates or herbivorous higher animals. The sequence is that of Putative bark agglutinin LECRPA3 from Robinia pseudoacacia (Black locust).